The sequence spans 67 residues: Sec-independent protein translocase protein TatA (67 aa).

Residues 1 to 21 form a helical membrane-spanning segment; it reads MFGIGIQELLVVLVLVLLVFG. The segment at 46-67 is disordered; it reads PDEIDITPGKKNGKTDKDDKQA. Over residues 58-67 the composition is skewed to basic and acidic residues; it reads GKTDKDDKQA.

Belongs to the TatA/E family. The Tat system comprises two distinct complexes: a TatABC complex, containing multiple copies of TatA, TatB and TatC subunits, and a separate TatA complex, containing only TatA subunits. Substrates initially bind to the TatABC complex, which probably triggers association of the separate TatA complex to form the active translocon.

The protein resides in the cell inner membrane. In terms of biological role, part of the twin-arginine translocation (Tat) system that transports large folded proteins containing a characteristic twin-arginine motif in their signal peptide across membranes. TatA could form the protein-conducting channel of the Tat system. This Nitratidesulfovibrio vulgaris (strain DSM 19637 / Miyazaki F) (Desulfovibrio vulgaris) protein is Sec-independent protein translocase protein TatA.